A 601-amino-acid polypeptide reads, in one-letter code: UBA domain-containing protein 3 (601 aa).

The region spanning 7 to 129 (ETAIRELVQS…LFLDENHSTN (123 aa)) is the Arf-GAP domain. Disordered regions lie at residues 123–158 (DENHSTNSKPPSLPPRTKSSSQSSPMASTSTSKSRY) and 289–310 (EPNQPLQPLRPSMTGPVPSSMG). Residues 139–156 (TKSSSQSSPMASTSTSKS) show a composition bias toward low complexity. One can recognise a UBA domain in the interval 157-197 (RYADSLSTLHDMGFSDDSVNTHALEETNGDVTRAIEKIVQH).

This Schizosaccharomyces pombe (strain 972 / ATCC 24843) (Fission yeast) protein is UBA domain-containing protein 3 (ucp3).